The sequence spans 145 residues: Hemoglobin fetal subunit beta (145 aa).

A Globin domain is found at 1–145 (MLSAEEKASV…VANALAHRYH (145 aa)). Heme b is bound by residues H62 and H91.

The protein belongs to the globin family. In terms of assembly, heterotetramer of two alpha chains and two beta chains. In terms of tissue distribution, red blood cells.

In terms of biological role, involved in oxygen transport from the lung to the various peripheral tissues. The protein is Hemoglobin fetal subunit beta of Capra hircus (Goat).